A 599-amino-acid chain; its full sequence is Beta-(1--&gt;2)glucan export ATP-binding/permease protein NdvA (599 aa).

The ABC transmembrane type-1 domain maps to 21–301 (TITMCVASVL…ISAFINQTVT (281 aa)). 5 helical membrane passes run 22-42 (ITMC…PVLF), 55-75 (IFSP…AAVF), 156-176 (MRMS…GQLV), 248-268 (MAST…VTKG), and 276-296 (IAFI…SAFI). In terms of domain architecture, ABC transporter spans 335–569 (IVFDNVTFEF…GGRFSDLLRA (235 aa)). An ATP-binding site is contributed by 368–375 (GPTGAGKT).

It belongs to the ABC transporter superfamily. Beta-(1--&gt;2)glucan exporter (TC 3.A.1.108.1) family. Homodimer.

It localises to the cell inner membrane. The catalysed reaction is [(1-&gt;2)-beta-D-glucosyl](n)(in) + ATP + H2O = [(1-&gt;2)-beta-D-glucosyl](n)(out) + ADP + phosphate + H(+). Functionally, involved in beta-(1--&gt;2)glucan export. Transmembrane domains (TMD) form a pore in the inner membrane and the ATP-binding domain (NBD) is responsible for energy generation. The protein is Beta-(1--&gt;2)glucan export ATP-binding/permease protein NdvA of Brucella suis biovar 1 (strain 1330).